Consider the following 218-residue polypeptide: MSIGILGKKLGMSQLFDEQGRAVPVTLIEAGPCRITQLKNDDTDGYAAVQIGFGETREKLINKPSKGHLTKSGEDLLRHLREYRVDNVDGLELGGSITVSDFEAGQKVDVSGDTMGRGFAGLQKRHGFSRGPMTHGSKNHRQPGSIGAGTTPGRIYPGKRMSGRYGGKKTTTRGLTILRIDSDRNLLVVKGSVPGKPGALLNIKPAVRVGAKPAKGGK.

The segment at 126 to 169 (HGFSRGPMTHGSKNHRQPGSIGAGTTPGRIYPGKRMSGRYGGKK) is disordered.

It belongs to the universal ribosomal protein uL3 family. Part of the 50S ribosomal subunit. Forms a cluster with proteins L14 and L19.

Its function is as follows. One of the primary rRNA binding proteins, it binds directly near the 3'-end of the 23S rRNA, where it nucleates assembly of the 50S subunit. This Synechococcus sp. (strain CC9902) protein is Large ribosomal subunit protein uL3.